A 267-amino-acid polypeptide reads, in one-letter code: tRNA pseudouridine synthase A (267 aa).

Asp55 acts as the Nucleophile in catalysis. Position 109 (Tyr109) interacts with substrate.

This sequence belongs to the tRNA pseudouridine synthase TruA family.

It carries out the reaction uridine(38/39/40) in tRNA = pseudouridine(38/39/40) in tRNA. Formation of pseudouridine at positions 38, 39 and 40 in the anticodon stem and loop of transfer RNAs. The protein is tRNA pseudouridine synthase A of Natronomonas pharaonis (strain ATCC 35678 / DSM 2160 / CIP 103997 / JCM 8858 / NBRC 14720 / NCIMB 2260 / Gabara) (Halobacterium pharaonis).